A 1001-amino-acid polypeptide reads, in one-letter code: Copper-transporting ATPase RAN1 (1001 aa).

Residues 1 to 21 (MAPSRRDLQLTPVTGGSSSQI) are disordered. Topologically, residues 1–298 (MAPSRRDLQL…TGEASNMFRR (298 aa)) are cytoplasmic. The span at 11–21 (TPVTGGSSSQI) shows a compositional bias: polar residues. 2 consecutive HMA domains span residues 56 to 122 (RKIQ…FEAE) and 133 to 199 (LVGQ…FEGS). Cu(+) is bound by residues Cys67, Cys70, Cys144, and Cys147. The HMA 3; degenerate domain occupies 207-273 (DKLVLRVDGI…GIEEDGFGKF (67 aa)). A helical membrane pass occupies residues 299–320 (FISSLVLSIPLFFIQVICPHIA). Topologically, residues 321 to 338 (LFDALLVWRCGPFMMGDW) are extracellular. A helical membrane pass occupies residues 339–358 (LKWALVSVIQFVIGKRFYVA). Topologically, residues 359 to 365 (AWRALRN) are cytoplasmic. Residues 366–386 (GSTNMDVLVALGTSASYFYSV) form a helical membrane-spanning segment. Topologically, residues 387–403 (GALLYGAVTGFWSPTYF) are extracellular. Residues 404–424 (DASAMLITFVLLGKYLESLAK) form a helical membrane-spanning segment. Residues 425 to 558 (GKTSDAMKKL…KAPIQKFADY (134 aa)) are Cytoplasmic-facing. The chain crosses the membrane as a helical span at residues 559–581 (VASIFVPVVITLALFTLVGWSIG). Topologically, residues 582-602 (GAVGAYPDEWLPENGTHFVFS) are extracellular. The chain crosses the membrane as a helical span at residues 603–620 (LMFSISVVVIACPCALGL). Topologically, residues 621–931 (ATPTAVMVAT…DLSRKTLTRI (311 aa)) are cytoplasmic. Catalysis depends on Asp658, which acts as the 4-aspartylphosphate intermediate. Residues Asp877 and Asp881 each coordinate Mg(2+). Residues 932-951 (RLNYVFAMAYNVVSIPIAAG) form a helical membrane-spanning segment. Over 952–963 (VFFPVLRVQLPP) the chain is Extracellular. A helical transmembrane segment spans residues 964–982 (WAAGACMALSSVSVVCSSL). Over 983–1001 (LLRRYKKPRLTTVLKITTE) the chain is Cytoplasmic.

It belongs to the cation transport ATPase (P-type) (TC 3.A.3) family. Type IB subfamily.

It is found in the membrane. The enzyme catalyses Cu(+)(in) + ATP + H2O = Cu(+)(out) + ADP + phosphate + H(+). Its function is as follows. Involved in copper import into the cell. Essential for ethylene signaling, which requires copper. Acts by delivering copper to create functional hormone receptors. This chain is Copper-transporting ATPase RAN1 (RAN1), found in Arabidopsis thaliana (Mouse-ear cress).